The following is a 528-amino-acid chain: Benzoylformate decarboxylase (528 aa).

Mg(2+)-binding residues include glutamine 117 and leucine 118. The segment at 377–460 is thiamine pyrophosphate binding; sequence TSTVTAFWQR…IILKNGTYGA (84 aa). Ca(2+)-binding residues include aspartate 428, asparagine 455, and threonine 457.

Belongs to the TPP enzyme family. In terms of assembly, homotetramer. Ca(2+) is required as a cofactor. The cofactor is thiamine diphosphate. It depends on Mg(2+) as a cofactor.

The enzyme catalyses phenylglyoxylate + H(+) = benzaldehyde + CO2. Its pathway is aromatic compound metabolism; (R)-mandelate degradation; benzoate from (R)-mandelate: step 3/4. This is Benzoylformate decarboxylase (mdlC) from Pseudomonas aeruginosa (strain ATCC 15692 / DSM 22644 / CIP 104116 / JCM 14847 / LMG 12228 / 1C / PRS 101 / PAO1).